Reading from the N-terminus, the 263-residue chain is MITVNTLQKMKAAGEKIVMLTAYESSFAALMDDAGVDVLLVGDSLGMAVQGRQSTLPVSLRDMCYHTECVARGAKNAMIVSDLPFGAYQQSKEQAFAAAAELMAAGAHMVKLEGGVWMAETTEFLQMRGIPVCAHIGLTPQSVFAFGGYKVQGRGGKAQALLNDAKAHDEAGAAVVLMECVPAELAKKVTETVSCPTIGIGAGADCDGQVLVMHDMLGIFPGKTAKFVKNFMRGQSSIQAAVRAYVAEVKAKTFPAAEHIFAD.

Mg(2+) contacts are provided by Asp-43 and Asp-82. 3-methyl-2-oxobutanoate-binding positions include 43–44 (DS), Asp-82, and Lys-111. Position 113 (Glu-113) interacts with Mg(2+). The Proton acceptor role is filled by Glu-179.

It belongs to the PanB family. In terms of assembly, homodecamer; pentamer of dimers. Mg(2+) serves as cofactor.

The protein resides in the cytoplasm. The catalysed reaction is 3-methyl-2-oxobutanoate + (6R)-5,10-methylene-5,6,7,8-tetrahydrofolate + H2O = 2-dehydropantoate + (6S)-5,6,7,8-tetrahydrofolate. The protein operates within cofactor biosynthesis; (R)-pantothenate biosynthesis; (R)-pantoate from 3-methyl-2-oxobutanoate: step 1/2. Its function is as follows. Catalyzes the reversible reaction in which hydroxymethyl group from 5,10-methylenetetrahydrofolate is transferred onto alpha-ketoisovalerate to form ketopantoate. In Neisseria gonorrhoeae (strain ATCC 700825 / FA 1090), this protein is 3-methyl-2-oxobutanoate hydroxymethyltransferase.